The following is a 277-amino-acid chain: Phosphonates import ATP-binding protein PhnC 2 (277 aa).

An ABC transporter domain is found at 5–253 (IHVQGLNKTF…FLNDLYGADA (249 aa)). 37–44 (GASGSGKS) provides a ligand contact to ATP.

Belongs to the ABC transporter superfamily. Phosphonates importer (TC 3.A.1.9.1) family. In terms of assembly, the complex is composed of two ATP-binding proteins (PhnC), two transmembrane proteins (PhnE) and a solute-binding protein (PhnD).

It is found in the cell inner membrane. The catalysed reaction is phosphonate(out) + ATP + H2O = phosphonate(in) + ADP + phosphate + H(+). Its function is as follows. Part of the ABC transporter complex PhnCDE involved in phosphonates import. Responsible for energy coupling to the transport system. The protein is Phosphonates import ATP-binding protein PhnC 2 of Pseudomonas savastanoi pv. phaseolicola (strain 1448A / Race 6) (Pseudomonas syringae pv. phaseolicola (strain 1448A / Race 6)).